A 409-amino-acid chain; its full sequence is Diels-Alderase ucsH (409 aa).

A helical transmembrane segment spans residues 386 to 406 (IYFFICMLLAVVTFGYINILE).

This sequence belongs to the Diels-Alderase family.

Its subcellular location is the membrane. It participates in mycotoxin biosynthesis. Its function is as follows. Diels-Alderase; part of the gene cluster that mediates the biosynthesis of UCS1025A, a member of the pyrrolizidinone family that acts as a strong telomerase inhibitor and displays potent antibacterial and antitumor properties. These compounds share a hemiaminal-containing pyrrolizidinone core fused with a gamma-lactone, giving a furopyrrolizidine that is connected to a decalin fragment. The polyketide synthase module (PKS) of the PKS-NRPS ucsA is responsible for the synthesis of the polyketide backbone via the condensation of an acetyl-CoA starter unit with 6 malonyl-CoA units. The downstream nonribosomal peptide synthetase (NRPS) module then amidates the carboxyl end of the polyketide with a 2S,3S-methylproline derived from L-isoleucine by the 2-oxoglutarate-dependent dioxygenase ucsF which converts L-isoleucine to (4S,5S)-4-methylpyrroline-5-carboxylate that is further converted to 2S,3S-methylproline by the pyrroline-5-carboxylate reductase ucsG. Reductive release of the completed aminoacyl polyketide from the assembly line can form the 3-pyrrolin-2-one structure via an intramolecular Knoevenagel reaction. Because ucsA lacks a designated enoylreductase (ER) domain, the required activity is provided the enoyl reductase ucsL. This keto acyclic precursor is the substrate of the Diels-Alderase ucsH, that catalyzes the Diels-Alder cycloaddition. Oxidation of the 3S-methyl group to a carboxylate by the cytochrome P450 monooxygenase ucsK allows an oxa-Michael cyclization that might involve the reductase/dehydrogenase ucsI and which furnishes the furopyrrolizidine. The oxidase ucsJ likely plays a critical role in stereoselective reduction of the C5-C6 double bond to afford the required R-configured carboxylate group. Further enolization and oxidation at C5 by an unidentified enzyme affords the last intermediate that can undergo oxa-Michael cyclization to yield UCS1025A. This chain is Diels-Alderase ucsH, found in Acremonium sp.